The chain runs to 182 residues: NADH-quinone oxidoreductase subunit I (182 aa).

4Fe-4S ferredoxin-type domains follow at residues 52 to 82 and 92 to 121; these read LTRD…LQKA and DFFR…LTPD. The [4Fe-4S] cluster site is built by cysteine 62, cysteine 65, cysteine 68, cysteine 72, cysteine 101, cysteine 104, cysteine 107, and cysteine 111.

It belongs to the complex I 23 kDa subunit family. As to quaternary structure, NDH-1 is composed of 13 different subunits. Subunits NuoA, H, J, K, L, M, N constitute the membrane sector of the complex. [4Fe-4S] cluster is required as a cofactor.

It localises to the cell inner membrane. The catalysed reaction is a quinone + NADH + 5 H(+)(in) = a quinol + NAD(+) + 4 H(+)(out). NDH-1 shuttles electrons from NADH, via FMN and iron-sulfur (Fe-S) centers, to quinones in the respiratory chain. The immediate electron acceptor for the enzyme in this species is believed to be ubiquinone. Couples the redox reaction to proton translocation (for every two electrons transferred, four hydrogen ions are translocated across the cytoplasmic membrane), and thus conserves the redox energy in a proton gradient. This Pseudomonas fluorescens (strain ATCC BAA-477 / NRRL B-23932 / Pf-5) protein is NADH-quinone oxidoreductase subunit I.